The primary structure comprises 184 residues: Putative rRNA methyltransferase YlbH (184 aa).

A disordered region spans residues 1-22; it reads MRVISGSKKGRSLKAVAGTSTR.

This sequence belongs to the methyltransferase superfamily. RsmD family.

Functionally, may catalyze the S-adenosyl-L-methionine-dependent methylation of a specific base in rRNA. In Bacillus subtilis (strain 168), this protein is Putative rRNA methyltransferase YlbH (ylbH).